Reading from the N-terminus, the 461-residue chain is L-seryl-tRNA(Sec) selenium transferase (461 aa).

Residue K291 is modified to N6-(pyridoxal phosphate)lysine.

This sequence belongs to the SelA family. Pyridoxal 5'-phosphate is required as a cofactor.

It is found in the cytoplasm. It catalyses the reaction L-seryl-tRNA(Sec) + selenophosphate + H(+) = L-selenocysteinyl-tRNA(Sec) + phosphate. The protein operates within aminoacyl-tRNA biosynthesis; selenocysteinyl-tRNA(Sec) biosynthesis; selenocysteinyl-tRNA(Sec) from L-seryl-tRNA(Sec) (bacterial route): step 1/1. In terms of biological role, converts seryl-tRNA(Sec) to selenocysteinyl-tRNA(Sec) required for selenoprotein biosynthesis. The chain is L-seryl-tRNA(Sec) selenium transferase from Caldanaerobacter subterraneus subsp. tengcongensis (strain DSM 15242 / JCM 11007 / NBRC 100824 / MB4) (Thermoanaerobacter tengcongensis).